A 351-amino-acid polypeptide reads, in one-letter code: Histidinol-phosphate aminotransferase 1 (351 aa).

N6-(pyridoxal phosphate)lysine is present on Lys210.

It belongs to the class-II pyridoxal-phosphate-dependent aminotransferase family. Histidinol-phosphate aminotransferase subfamily. As to quaternary structure, homodimer. Pyridoxal 5'-phosphate is required as a cofactor.

The catalysed reaction is L-histidinol phosphate + 2-oxoglutarate = 3-(imidazol-4-yl)-2-oxopropyl phosphate + L-glutamate. The protein operates within amino-acid biosynthesis; L-histidine biosynthesis; L-histidine from 5-phospho-alpha-D-ribose 1-diphosphate: step 7/9. The sequence is that of Histidinol-phosphate aminotransferase 1 (hisC1) from Pasteurella multocida (strain Pm70).